A 26-amino-acid polypeptide reads, in one-letter code: Somatostatin-1 (26 aa).

A disulfide bridge links cysteine 15 with cysteine 26.

It belongs to the somatostatin family.

The protein localises to the secreted. Somatostatin inhibits the release of somatotropin. This chain is Somatostatin-1 (sst1), found in Amia calva (Bowfin).